Reading from the N-terminus, the 146-residue chain is 3-hydroxyacyl-[acyl-carrier-protein] dehydratase FabZ (146 aa).

His48 is an active-site residue.

It belongs to the thioester dehydratase family. FabZ subfamily.

The protein localises to the cytoplasm. The catalysed reaction is a (3R)-hydroxyacyl-[ACP] = a (2E)-enoyl-[ACP] + H2O. Functionally, involved in unsaturated fatty acids biosynthesis. Catalyzes the dehydration of short chain beta-hydroxyacyl-ACPs and long chain saturated and unsaturated beta-hydroxyacyl-ACPs. The polypeptide is 3-hydroxyacyl-[acyl-carrier-protein] dehydratase FabZ (Teredinibacter turnerae (strain ATCC 39867 / T7901)).